Consider the following 542-residue polypeptide: Organic anion transporter 3 (542 aa).

The Cytoplasmic segment spans residues methionine 1–histidine 20. Position 4 is a phosphoserine (serine 4). Residues valine 21–threonine 41 traverse the membrane as a helical segment. Residues alanine 42–glutamate 123 are Extracellular-facing. A glycan (N-linked (GlcNAc...) asparagine) is linked at asparagine 86. A helical transmembrane segment spans residues methionine 124–serine 144. At aspartate 145 to threonine 154 the chain is on the cytoplasmic side. A helical membrane pass occupies residues cysteine 155–isoleucine 175. Position 176 (tyrosine 176) is a topological domain, extracellular. A helical transmembrane segment spans residues methionine 177–leucine 197. The Cytoplasmic portion of the chain corresponds to asparagine 198 to threonine 212. A helical transmembrane segment spans residues alanine 213 to proline 233. Topologically, residues glutamine 234–arginine 236 are extracellular. The helical transmembrane segment at tryptophan 237 to proline 257 threads the bilayer. Topologically, residues glutamate 258–threonine 327 are cytoplasmic. The helical transmembrane segment at phenylalanine 328–valine 348 threads the bilayer. Residues glutamate 349 to asparagine 354 are Extracellular-facing. The helical transmembrane segment at leucine 355–leucine 375 threads the bilayer. Topologically, residues serine 376–glutamine 386 are cytoplasmic. A helical transmembrane segment spans residues alanine 387–leucine 407. At glutamine 408–proline 471 the chain is on the extracellular side. The chain crosses the membrane as a helical span at residues phenylalanine 472–leucine 492. At proline 493–serine 542 the chain is on the cytoplasmic side. Residues lysine 515–serine 542 are disordered. Residues proline 517–serine 527 are compositionally biased toward basic and acidic residues.

This sequence belongs to the major facilitator (TC 2.A.1) superfamily. Organic cation transporter (TC 2.A.1.19) family.

It localises to the basolateral cell membrane. It catalyses the reaction estrone 3-sulfate(out) + glutarate(in) = estrone 3-sulfate(in) + glutarate(out). The catalysed reaction is estrone 3-sulfate(in) + 2-oxoglutarate(out) = estrone 3-sulfate(out) + 2-oxoglutarate(in). It carries out the reaction glutarate(in) + 2-oxoglutarate(out) = glutarate(out) + 2-oxoglutarate(in). The enzyme catalyses urate(in) + 2-oxoglutarate(out) = urate(out) + 2-oxoglutarate(in). It catalyses the reaction taurocholate(out) + glutarate(in) = taurocholate(in) + glutarate(out). The catalysed reaction is dehydroepiandrosterone 3-sulfate(out) + glutarate(in) = dehydroepiandrosterone 3-sulfate(in) + glutarate(out). It carries out the reaction prostaglandin F2alpha(out) + glutarate(in) = prostaglandin F2alpha(in) + glutarate(out). The enzyme catalyses prostaglandin F2alpha(out) + 2-oxoglutarate(in) = prostaglandin F2alpha(in) + 2-oxoglutarate(out). It catalyses the reaction (R)-carnitine(out) + 2-oxoglutarate(in) = (R)-carnitine(in) + 2-oxoglutarate(out). The catalysed reaction is glutarate(in) + (R)-carnitine(out) = glutarate(out) + (R)-carnitine(in). It carries out the reaction prostaglandin E2(out) + 2-oxoglutarate(in) = prostaglandin E2(in) + 2-oxoglutarate(out). The enzyme catalyses prostaglandin E2(out) + glutarate(in) = prostaglandin E2(in) + glutarate(out). It catalyses the reaction urate(in) + glutarate(out) = urate(out) + glutarate(in). The catalysed reaction is taurocholate(out) + 2-oxoglutarate(in) = taurocholate(in) + 2-oxoglutarate(out). It carries out the reaction dehydroepiandrosterone 3-sulfate(out) + 2-oxoglutarate(in) = dehydroepiandrosterone 3-sulfate(in) + 2-oxoglutarate(out). The enzyme catalyses kynurenate(out) + a dicarboxylate(in) = kynurenate(in) + a dicarboxylate(out). It catalyses the reaction (indol-3-yl)acetate(out) + a dicarboxylate(in) = (indol-3-yl)acetate(in) + a dicarboxylate(out). The catalysed reaction is indoxyl sulfate(out) + a dicarboxylate(in) = indoxyl sulfate(in) + a dicarboxylate(out). It carries out the reaction N-benzoylglycine(out) + a dicarboxylate(in) = N-benzoylglycine(in) + a dicarboxylate(out). The enzyme catalyses 3-carboxy-4-methyl-5-propyl-2-furanpropanoate(out) + a dicarboxylate(in) = 3-carboxy-4-methyl-5-propyl-2-furanpropanoate(in) + a dicarboxylate(out). It catalyses the reaction (6R)-L-erythro-5,6,7,8-tetrahydrobiopterin(out) + a dicarboxylate(in) = (6R)-L-erythro-5,6,7,8-tetrahydrobiopterin(in) + a dicarboxylate(out). The catalysed reaction is L-erythro-7,8-dihydrobiopterin(out) + a dicarboxylate(in) = L-erythro-7,8-dihydrobiopterin(in) + a dicarboxylate(out). It carries out the reaction L-sepiapterin(out) + a dicarboxylate(in) = L-sepiapterin(in) + a dicarboxylate(out). Its function is as follows. Functions as an organic anion/dicarboxylate exchanger that couples organic anion uptake indirectly to the sodium gradient. Transports organic anions such as estrone 3-sulfate (E1S) and urate in exchange for dicarboxylates such as glutarate or ketoglutarate (2-oxoglutarate). Plays an important role in the excretion of endogenous and exogenous organic anions, especially from the kidney and the brain. E1S transport is pH- and chloride-dependent and may also involve E1S/cGMP exchange. Responsible for the transport of prostaglandin E2 (PGE2) and prostaglandin F2(alpha) (PGF2(alpha)) in the basolateral side of the renal tubule. Involved in the transport of neuroactive tryptophan metabolites kynurenate and xanthurenate. Functions as a biopterin transporters involved in the uptake and the secretion of coenzymes tetrahydrobiopterin (BH4), dihydrobiopterin (BH2) and sepiapterin to urine, thereby determining baseline levels of blood biopterins. May be involved in the basolateral transport of steviol, a metabolite of the popular sugar substitute stevioside. May participate in the detoxification/ renal excretion of drugs and xenobiotics, such as the histamine H(2)-receptor antagonists fexofenadine and cimetidine, the antibiotic benzylpenicillin (PCG), the anionic herbicide 2,4-dichloro-phenoxyacetate (2,4-D), the diagnostic agent p-aminohippurate (PAH), the antiviral acyclovir (ACV), and the mycotoxin ochratoxin (OTA), by transporting these exogenous organic anions across the cell membrane in exchange for dicarboxylates such as 2-oxoglutarate. Contributes to the renal uptake of potent uremic toxins (indoxyl sulfate (IS), indole acetate (IA), hippurate/N-benzoylglycine (HA) and 3-carboxy-4-methyl-5-propyl-2-furanpropionate (CMPF)), pravastatin, PCG, E1S and dehydroepiandrosterone sulfate (DHEAS), and is partly involved in the renal uptake of temocaprilat (an angiotensin-converting enzyme (ACE) inhibitor). May contribute to the release of cortisol in the adrenals. Involved in one of the detoxification systems on the choroid plexus (CP), removes substrates such as E1S or taurocholate (TC), PCG, 2,4-D and PAH, from the cerebrospinal fluid (CSF) to the blood for eventual excretion in urine and bile. Also contributes to the uptake of several other organic compounds such as the prostanoids prostaglandin E(2) and prostaglandin F(2-alpha), L-carnitine, and the therapeutic drugs allopurinol, 6-mercaptopurine (6-MP) and 5-fluorouracil (5-FU). Mediates the transport of PAH, PCG, and the statins pravastatin and pitavastatin, from the cerebrum into the blood circulation across the blood-brain barrier (BBB). In summary, plays a role in the efflux of drugs and xenobiotics, helping reduce their undesired toxicological effects on the body. The protein is Organic anion transporter 3 (SLC22A8) of Pongo abelii (Sumatran orangutan).